Consider the following 218-residue polypeptide: Small ribosomal subunit protein uS3 (218 aa).

The region spanning 40 to 109 (IRKIINTEYS…DVSINIREVK (70 aa)) is the KH type-2 domain.

Belongs to the universal ribosomal protein uS3 family. Part of the 30S ribosomal subunit. Forms a tight complex with proteins S10 and S14.

Binds the lower part of the 30S subunit head. Binds mRNA in the 70S ribosome, positioning it for translation. In Orientia tsutsugamushi (strain Boryong) (Rickettsia tsutsugamushi), this protein is Small ribosomal subunit protein uS3.